We begin with the raw amino-acid sequence, 405 residues long: MLIDHLNRQQLEREAQGLQRQRRIAESPCAPRQWVSQDGQPAREMLAFCSNDYLGLANHPALVEALAEGARQFGAGSGASHLISGHSRAHAALEGDLAAWLAPSIPNAAALYFCTGYLANLALLTALGDASATIFADKLNHASLIDGALLAKATMQRYAHRNLTVLASQLESCTTPIKLIVTDAVFSMDGDLADLPALLALAERFDAWLIVDDAHGFGVLGDQGRGSLSHFGLRSERLIYMGTLGKAAGLGGAFVAAHPSIIDWLVQAARPYIYTTAAPPAVAHALRESLRLISSAEGEQRRAHLQQLIIQLRTQLSALIGAHPTLGWRLADSSTAIQPLIVGDNAAALALMAALDAQGLWVPAIRPPTVPVGTARLRITLSATHSAADVQRLVDGLACAARELP.

Position 20 (arginine 20) interacts with substrate. Position 116 to 117 (116 to 117 (GY)) interacts with pyridoxal 5'-phosphate. Histidine 141 lines the substrate pocket. Pyridoxal 5'-phosphate-binding residues include serine 187, histidine 215, and threonine 243. Position 246 is an N6-(pyridoxal phosphate)lysine (lysine 246). Residue threonine 369 coordinates substrate.

The protein belongs to the class-II pyridoxal-phosphate-dependent aminotransferase family. BioF subfamily. Homodimer. The cofactor is pyridoxal 5'-phosphate.

It carries out the reaction 6-carboxyhexanoyl-[ACP] + L-alanine + H(+) = (8S)-8-amino-7-oxononanoate + holo-[ACP] + CO2. It participates in cofactor biosynthesis; biotin biosynthesis. Catalyzes the decarboxylative condensation of pimeloyl-[acyl-carrier protein] and L-alanine to produce 8-amino-7-oxononanoate (AON), [acyl-carrier protein], and carbon dioxide. This is 8-amino-7-oxononanoate synthase 2 from Polaromonas sp. (strain JS666 / ATCC BAA-500).